The sequence spans 323 residues: Mortality factor 4-like protein 1 (323 aa).

The Tudor-knot domain maps to 12–62 (QEGERVLCFHGPLLYEAKCVKVAIKDKQVKYFIHHSGWNKNWDEWVPESRV). The interval 76–143 (LQKANQEQYA…RKKRARVDPT (68 aa)) is disordered. The sufficient for interaction with SIN3A stretch occupies residues 94–227 (PGKKTSGLQQ…VAGIKEYFNV (134 aa)). Positions 96–107 (KKTSGLQQKNVD) match the Nuclear localization signal motif. Lysine 104 carries the post-translational modification N6-acetyllysine. The interaction with RB1-1 stretch occupies residues 125-191 (STSETPQPPR…FYLPAKKNVD (67 aa)). Positions 149-303 (TFMNRVEVKV…FLKYLAKNSA (155 aa)) are sufficient for interaction with PHF12. The 172-residue stretch at 152–323 (NRVEVKVKIP…APPEYHRKAV (172 aa)) folds into the MRG domain. The interval 284–305 (LALLLNYLHDFLKYLAKNSATL) is interaction with RB1-2.

Component of the NuA4 histone acetyltransferase complex which contains the catalytic subunit KAT5/TIP60 and the subunits EP400, TRRAP/PAF400, BRD8/SMAP, EPC1, DMAP1/DNMAP1, RUVBL1/TIP49, RUVBL2, ING3, actin, ACTL6A/BAF53A, MORF4L1/MRG15, MORF4L2/MRGX, MRGBP, YEATS4/GAS41, VPS72/YL1 and MEAF6. The NuA4 complex interacts with MYC and the adenovirus E1A protein. MORF4L1 may also participate in the formation of NuA4 related complexes which lack the KAT5/TIP60 catalytic subunit, but which include the SWI/SNF related protein SRCAP. Component of the mSin3A histone deacetylase complex, which includes SIN3A, HDAC2, ARID4B, MORF4L1, RBBP4/RbAp48, and RBBP7/RbAp46. May also interact with PHF12 and one or more as yet undefined members of the TLE (transducin-like enhancer of split) family of transcriptional repressors. Component of the SIN3B complex, which includes SIN3B, HDAC2 or HDAC1, PHF12 and MORF4L1. Interacts with RB1 and KAT8. Interacts with the N-terminus of MRFAP1. Found in a complex composed of MORF4L1, MRFAP1 and RB1. Interacts with the entire BRCA complex, which contains BRCA1, PALB2, BRCA2 and RAD51. Interacts with PALB2. Forms a complex with MSL1 and NUPR1.

It localises to the nucleus. Functionally, component of the NuA4 histone acetyltransferase (HAT) complex which is involved in transcriptional activation of select genes principally by acetylation of nucleosomal histones H4 and H2A. This modification may both alter nucleosome - DNA interactions and promote interaction of the modified histones with other proteins which positively regulate transcription. This complex may be required for the activation of transcriptional programs associated with oncogene and proto-oncogene mediated growth induction, tumor suppressor mediated growth arrest and replicative senescence, apoptosis, and DNA repair. The NuA4 complex ATPase and helicase activities seem to be, at least in part, contributed by the association of RUVBL1 and RUVBL2 with EP400. NuA4 may also play a direct role in DNA repair when directly recruited to sites of DNA damage. As part of the SIN3B complex represses transcription and counteracts the histone acetyltransferase activity of EP300 through the recognition H3K27ac marks by PHF12 and the activity of the histone deacetylase HDAC2. SIN3B complex is recruited downstream of the constitutively active genes transcriptional start sites through interaction with histones and mitigates histone acetylation and RNA polymerase II progression within transcribed regions contributing to the regulation of transcription. Required for homologous recombination repair (HRR) and resistance to mitomycin C (MMC). Involved in the localization of PALB2, BRCA2 and RAD51, but not BRCA1, to DNA-damage foci. This Pongo abelii (Sumatran orangutan) protein is Mortality factor 4-like protein 1 (MORF4L1).